Here is a 598-residue protein sequence, read N- to C-terminus: Nuclear receptor subfamily 4immunitygroup A member 1 (598 aa).

Disordered stretches follow at residues 1 to 44, 131 to 158, 177 to 206, and 221 to 265; these read MPCI…EAAP, YYGS…DGSF, LPKA…AQSP, and GESY…GSEG. The segment covering 134 to 145 has biased composition (low complexity); that stretch reads SPCSAPSPSTPS. Residues 171–466 form a required for nuclear import region; sequence RAWTEQLPKA…PGEGKLIFCS (296 aa). A DNA-binding region (nuclear receptor) is located at residues 264 to 339; that stretch reads EGRCAVCGDN…VGMVKEVVRT (76 aa). 2 NR C4-type zinc fingers span residues 267–287 and 303–327; these read CAVC…CEGC and CLAN…FQKC. Positions 268-354 are required for binding NBRE-containing DNA; sequence AVCGDNASCQ…RRGRLPSKPK (87 aa). The interval 299–361 is required for the interaction with RXRA; sequence AKYICLANKD…KPKQPPDASP (63 aa). Residue S341 is modified to Phosphoserine; by PKA. The interval 341–361 is disordered; that stretch reads SLKGRRGRLPSKPKQPPDASP. S351 carries the phosphoserine modification. One can recognise an NR LBD domain in the interval 360–595; the sequence is SPANLLTSLV…PIIDKIFMDT (236 aa). The interval 521 to 544 is binds lipopolysaccharide; the sequence is PRRVEELQNRIASCLKEHVAAVAG. Residues 584-595 are AF-2; the sequence is PPPIIDKIFMDT.

The protein belongs to the nuclear hormone receptor family. NR4 subfamily. In terms of assembly, binds the NGFI-B response element (NBRE) as a monomer. Binds the Nur response element (NurRE), consisting of two inverse NBRE-related octanucleotide repeats separated by 6 base-pairs, as a dimer. Interacts (via N-terminus) with NLRP3 (via LRR repeat domain); the interaction is direct, requires binding of NR4A1/Nur77 to NBRE-containing dsDNA and lipopolysaccharide, and leads to non-canonical NLRP3 inflammasome activation. Interacts with GADD45GIP1. Interacts with STK11. Interacts with IFI27. Heterodimer (via DNA-binding domain) with RXRA (via C-terminus); DNA-binding of the heterodimer is enhanced by 9-cis retinoic acid. Competes for the RXRA interaction with EP300 and thereby attenuates EP300 mediated acetylation of RXRA. Interacts with NCOA1. Interacts with NCOA2. Interacts with NCOA3. Zn(2+) serves as cofactor. Phosphorylated at Ser-351 by RPS6KA1 and RPS6KA3 in response to mitogenic or stress stimuli. In terms of processing, acetylated by p300/CBP, acetylation increases stability. Deacetylated by HDAC1. In terms of tissue distribution, fetal muscle and adult liver, brain and thyroid.

The protein localises to the nucleus. Its subcellular location is the cytoplasm. The protein resides in the cytosol. It localises to the mitochondrion. Its activity is regulated as follows. Its transcription factor activity is activated by binding cytosporone B (Csn-B) via its ligand-binding (NR LBD) domain and stimulates recruitment of coactivators NCOA1 and NCOA2, but not NCOA3, to promoters. Csn-B-binding is also accompanied by its translocation to the mitochondrion. Its transcription factor activity is activated by corticotropin-releasing hormone (CRH) and forskolin. Not activated by binding cytosporone C (Csn-C). Its function is as follows. Orphan nuclear receptor. Binds the NGFI-B response element (NBRE) 5'-AAAGGTCA-3'. Binds 9-cis-retinoic acid outside of its ligand-binding (NR LBD) domain. Participates in energy homeostasis by sequestrating the kinase STK11 in the nucleus, thereby attenuating cytoplasmic AMPK activation. Regulates the inflammatory response in macrophages by regulating metabolic adaptations during inflammation, including repressing the transcription of genes involved in the citric acid cycle (TCA). Inhibits NF-kappa-B signaling by binding to low-affinity NF-kappa-B binding sites, such as at the IL2 promoter. May act concomitantly with NR4A2 in regulating the expression of delayed-early genes during liver regeneration. Plays a role in the vascular response to injury. Functionally, in the cytosol, upon its detection of both bacterial lipopolysaccharide (LPS) and NBRE-containing mitochondrial DNA released by GSDMD pores during pyroptosis, it promotes non-canonical NLRP3 inflammasome activation by stimulating association of NLRP3 and NEK7. The polypeptide is Nuclear receptor subfamily 4immunitygroup A member 1 (NR4A1) (Homo sapiens (Human)).